We begin with the raw amino-acid sequence, 225 residues long: UPF0758 protein NMCC_1157 (225 aa).

Residues 102–224 (VLSDPDTVAD…VRSFRQLGLM (123 aa)) form the MPN domain. Zn(2+) contacts are provided by His-173, His-175, and Asp-186. The short motif at 173–186 (HNHPGGSPEPSQED) is the JAMM motif element.

The protein belongs to the UPF0758 family.

The polypeptide is UPF0758 protein NMCC_1157 (Neisseria meningitidis serogroup C (strain 053442)).